Consider the following 340-residue polypeptide: Lipopolysaccharide core biosynthesis glycosyltransferase LpsE (340 aa).

The protein belongs to the glycosyltransferase group 1 family. Glycosyltransferase 4 subfamily.

The protein operates within bacterial outer membrane biogenesis; LPS core biosynthesis. This chain is Lipopolysaccharide core biosynthesis glycosyltransferase LpsE (lpsE), found in Rhizobium meliloti (strain 1021) (Ensifer meliloti).